The chain runs to 328 residues: 4-hydroxy-3-methylbut-2-enyl diphosphate reductase (328 aa).

Cys-13 contacts [4Fe-4S] cluster. (2E)-4-hydroxy-3-methylbut-2-enyl diphosphate contacts are provided by His-41 and His-75. His-41 and His-75 together coordinate dimethylallyl diphosphate. Residues His-41 and His-75 each contribute to the isopentenyl diphosphate site. Cys-97 is a binding site for [4Fe-4S] cluster. His-125 lines the (2E)-4-hydroxy-3-methylbut-2-enyl diphosphate pocket. A dimethylallyl diphosphate-binding site is contributed by His-125. Isopentenyl diphosphate is bound at residue His-125. Catalysis depends on Glu-127, which acts as the Proton donor. Thr-168 contributes to the (2E)-4-hydroxy-3-methylbut-2-enyl diphosphate binding site. A [4Fe-4S] cluster-binding site is contributed by Cys-225. Positions 253, 254, 255, and 302 each coordinate (2E)-4-hydroxy-3-methylbut-2-enyl diphosphate. Ser-253, Ser-254, Asn-255, and Ser-302 together coordinate dimethylallyl diphosphate. Isopentenyl diphosphate is bound by residues Ser-253, Ser-254, Asn-255, and Ser-302.

Belongs to the IspH family. The cofactor is [4Fe-4S] cluster.

It carries out the reaction isopentenyl diphosphate + 2 oxidized [2Fe-2S]-[ferredoxin] + H2O = (2E)-4-hydroxy-3-methylbut-2-enyl diphosphate + 2 reduced [2Fe-2S]-[ferredoxin] + 2 H(+). It catalyses the reaction dimethylallyl diphosphate + 2 oxidized [2Fe-2S]-[ferredoxin] + H2O = (2E)-4-hydroxy-3-methylbut-2-enyl diphosphate + 2 reduced [2Fe-2S]-[ferredoxin] + 2 H(+). It functions in the pathway isoprenoid biosynthesis; dimethylallyl diphosphate biosynthesis; dimethylallyl diphosphate from (2E)-4-hydroxy-3-methylbutenyl diphosphate: step 1/1. It participates in isoprenoid biosynthesis; isopentenyl diphosphate biosynthesis via DXP pathway; isopentenyl diphosphate from 1-deoxy-D-xylulose 5-phosphate: step 6/6. Functionally, catalyzes the conversion of 1-hydroxy-2-methyl-2-(E)-butenyl 4-diphosphate (HMBPP) into a mixture of isopentenyl diphosphate (IPP) and dimethylallyl diphosphate (DMAPP). Acts in the terminal step of the DOXP/MEP pathway for isoprenoid precursor biosynthesis. The protein is 4-hydroxy-3-methylbut-2-enyl diphosphate reductase of Chlorobium chlorochromatii (strain CaD3).